We begin with the raw amino-acid sequence, 252 residues long: 5'-nucleotidase SurE (252 aa).

Residues Asp-8, Asp-9, Ser-39, and Asn-91 each contribute to the a divalent metal cation site.

This sequence belongs to the SurE nucleotidase family. It depends on a divalent metal cation as a cofactor.

The protein resides in the cytoplasm. It catalyses the reaction a ribonucleoside 5'-phosphate + H2O = a ribonucleoside + phosphate. Its function is as follows. Nucleotidase that shows phosphatase activity on nucleoside 5'-monophosphates. This is 5'-nucleotidase SurE from Bordetella pertussis (strain Tohama I / ATCC BAA-589 / NCTC 13251).